Reading from the N-terminus, the 385-residue chain is 1-deoxy-D-xylulose 5-phosphate reductoisomerase (385 aa).

Residues T10, G11, S12, I13, K37, and N124 each coordinate NADPH. K125 is a binding site for 1-deoxy-D-xylulose 5-phosphate. E126 serves as a coordination point for NADPH. Mn(2+) is bound at residue D150. 1-deoxy-D-xylulose 5-phosphate is bound by residues S151, E152, S176, and H199. A Mn(2+)-binding site is contributed by E152. G205 contributes to the NADPH binding site. 1-deoxy-D-xylulose 5-phosphate is bound by residues S212, N217, K218, and E221. E221 contributes to the Mn(2+) binding site.

This sequence belongs to the DXR family. The cofactor is Mg(2+). Mn(2+) is required as a cofactor.

It carries out the reaction 2-C-methyl-D-erythritol 4-phosphate + NADP(+) = 1-deoxy-D-xylulose 5-phosphate + NADPH + H(+). It functions in the pathway isoprenoid biosynthesis; isopentenyl diphosphate biosynthesis via DXP pathway; isopentenyl diphosphate from 1-deoxy-D-xylulose 5-phosphate: step 1/6. Functionally, catalyzes the NADPH-dependent rearrangement and reduction of 1-deoxy-D-xylulose-5-phosphate (DXP) to 2-C-methyl-D-erythritol 4-phosphate (MEP). This chain is 1-deoxy-D-xylulose 5-phosphate reductoisomerase, found in Clostridium botulinum (strain Langeland / NCTC 10281 / Type F).